Reading from the N-terminus, the 165-residue chain is Probable cell wall protein PGA15 (165 aa).

An N-terminal signal peptide occupies residues 1 to 16; that stretch reads MKFIIILFTLISIVTA. The GPI-anchor amidated serine moiety is linked to residue S143. A propeptide spans 144–165 (removed in mature form); that stretch reads GAANYLTSFSIGTFFVFVLGLI.

It belongs to the IHD1 family. Post-translationally, the GPI-anchor is attached to the protein in the endoplasmic reticulum and serves to target the protein to the cell surface. There, the glucosamine-inositol phospholipid moiety is cleaved off and the GPI-modified mannoprotein is covalently attached via its lipidless GPI glycan remnant to the 1,6-beta-glucan of the outer cell wall layer.

It localises to the secreted. It is found in the cell wall. The protein localises to the membrane. Functionally, probable GPI-anchored cell wall protein that may be involved in cell wall organization, hyphal growth, as well as in virulence. The polypeptide is Probable cell wall protein PGA15 (PGA15) (Candida albicans (strain SC5314 / ATCC MYA-2876) (Yeast)).